The chain runs to 167 residues: Transmembrane protein B169L (167 aa).

Transmembrane regions (helical) follow at residues 28 to 48 (NPFIVALIITAVVLVVFFAIC) and 60 to 80 (TAIYLYICIVALLFLHYYVLN). The N-linked (GlcNAc...) asparagine; by host glycan is linked to Asn-88.

Belongs to the asfivirus B169L family.

The protein resides in the host membrane. It localises to the virion. The chain is Transmembrane protein B169L from African swine fever virus (isolate Tick/Malawi/Lil 20-1/1983) (ASFV).